The primary structure comprises 89 residues: Small ribosomal subunit protein uS15 (89 aa).

This sequence belongs to the universal ribosomal protein uS15 family. In terms of assembly, part of the 30S ribosomal subunit. Forms a bridge to the 50S subunit in the 70S ribosome, contacting the 23S rRNA.

In terms of biological role, one of the primary rRNA binding proteins, it binds directly to 16S rRNA where it helps nucleate assembly of the platform of the 30S subunit by binding and bridging several RNA helices of the 16S rRNA. Its function is as follows. Forms an intersubunit bridge (bridge B4) with the 23S rRNA of the 50S subunit in the ribosome. In Phocaeicola vulgatus (strain ATCC 8482 / DSM 1447 / JCM 5826 / CCUG 4940 / NBRC 14291 / NCTC 11154) (Bacteroides vulgatus), this protein is Small ribosomal subunit protein uS15.